A 141-amino-acid polypeptide reads, in one-letter code: Transcriptional regulator MraZ (141 aa).

SpoVT-AbrB domains lie at Thr5–Asp47 and Ala76–Gln119.

It belongs to the MraZ family. Forms oligomers.

The protein localises to the cytoplasm. It localises to the nucleoid. In Mycoplasma genitalium (strain ATCC 33530 / DSM 19775 / NCTC 10195 / G37) (Mycoplasmoides genitalium), this protein is Transcriptional regulator MraZ.